Reading from the N-terminus, the 151-residue chain is MAKRVQVALTESIASLGKEGDLVEVAPGYARNFLLPYGKAMNVTPAVLKQIERKKEKEKIAADKLKQEALDFQTALSTIGRFTIKKQVGEDGVLFGTVTNGDVAEAIEAATKKEIDRRNITVPDIHNLGSFTAKIKLHPEVNAEVNIEVTS.

The protein belongs to the bacterial ribosomal protein bL9 family.

Its function is as follows. Binds to the 23S rRNA. This Prochlorococcus marinus (strain MIT 9301) protein is Large ribosomal subunit protein bL9.